A 549-amino-acid polypeptide reads, in one-letter code: Cell pattern formation-associated protein StuA (549 aa).

The region spanning Arg86 to Pro192 is the HTH APSES-type domain. A DNA-binding region (H-T-H motif) is located at residues Gly120–Glu141. Disordered stretches follow at residues Ala205 to Ile227, Ser246 to Arg288, Arg332 to Asn466, and Ala514 to Gly549. Residues Ser246 to Gln266 are compositionally biased toward polar residues. Composition is skewed to basic and acidic residues over residues Arg278 to Arg288, Arg332 to His346, and Arg385 to Ser395. Residues Thr516–Gln545 are nuclear localization domain. Low complexity predominate over residues Ala532–Gly549.

It belongs to the EFG1/PHD1/stuA family.

The protein localises to the nucleus. Its function is as follows. Transcription factor that regulates asexual reproduction. Binds the StuA-response elements (StRE) with the consensus sequence 5'-(A/T)CGCG(T/A)N(A/C)-3' at the promoters of target genes. The chain is Cell pattern formation-associated protein StuA from Gibberella moniliformis (strain M3125 / FGSC 7600) (Maize ear and stalk rot fungus).